Here is a 166-residue protein sequence, read N- to C-terminus: Ribosome maturation factor RimP (166 aa).

Belongs to the RimP family.

The protein resides in the cytoplasm. In terms of biological role, required for maturation of 30S ribosomal subunits. This Rickettsia akari (strain Hartford) protein is Ribosome maturation factor RimP.